A 79-amino-acid chain; its full sequence is UPF0337 protein YhjA (79 aa).

Residues 1 to 30 (MALNDKLDATKDKVSGKVKETTGKVTGDEK) are disordered.

This sequence belongs to the UPF0337 (CsbD) family.

This is UPF0337 protein YhjA (yhjA) from Lactococcus lactis subsp. lactis (strain IL1403) (Streptococcus lactis).